We begin with the raw amino-acid sequence, 548 residues long: GLC7-interacting protein 2 (548 aa).

The span at 1–23 shows a compositional bias: basic and acidic residues; the sequence is MYIKAEQKPQQFERKNEKLDRNK. Disordered regions lie at residues 1–54 and 118–143; these read MYIK…STEE and VESLNGSTRPPFKIELPPLSPKSTVP. Ser-51 carries the post-translational modification Phosphoserine. The residue at position 52 (Thr-52) is a Phosphothreonine. Ser-155 is subject to Phosphoserine. The tract at residues 191-212 is disordered; that stretch reads RSKSLPTTPGIRSGNGVQARDG. 2 positions are modified to phosphoserine: Ser-221 and Ser-238. The tract at residues 293–346 is disordered; it reads FAHPAKISNPNNGKGTNNTKLRKSKRFQNLLKNRTDMPPSKSNKKFVNGGGAHE. Residues 419–534 form the CBM21 domain; it reads HNGNDCNGVA…NNNGNNYKVD (116 aa).

Interacts with phosphatase 1 (GLC7).

The chain is GLC7-interacting protein 2 (GIP2) from Saccharomyces cerevisiae (strain ATCC 204508 / S288c) (Baker's yeast).